Here is a 374-residue protein sequence, read N- to C-terminus: GDSL esterase/lipase At1g71250 (374 aa).

The N-terminal stretch at 1–28 is a signal peptide; it reads MNTNRKKMKVHIGGYVLILALTVSVILQ. The Nucleophile role is filled by Ser-48. The N-linked (GlcNAc...) asparagine glycan is linked to Asn-162. Residues Asp-338 and His-341 contribute to the active site.

The protein belongs to the 'GDSL' lipolytic enzyme family.

The protein resides in the secreted. The sequence is that of GDSL esterase/lipase At1g71250 from Arabidopsis thaliana (Mouse-ear cress).